The chain runs to 369 residues: MPPMLWLLLHFAAPALGFYFSISCPSGKQCQQALLSGNDILLYCNSSGAHWYYLFTQGKKGRLTSLTNISNMEIMPEGSLLIKDPLPSQTGLYHCWNKNGRQVVQYEIDFQDVTTLHITHKDLGQRPLQNETLHLGSKQLIFTWWEPWQDCNRCEEPGECKRLGYRYIEEPLEEAMPCWLYLGEVLVWSSRLRPELQVEACHVQCTNNTQLRVDYVIFDNFRLDEKTEFVWLDCPLGSMYRPVNWRANDTPLTWESQLSGQDFTTFLDPSTGGRQLQVFQPAVYKCFVQQELVAQFKPAASLETLEAQWRENDAQWREARKALRGRADSVLKGLKLVLLVVTVLALLGALLKCIHPSPGRRSTQVLVVK.

The signal sequence occupies residues 1 to 17 (MPPMLWLLLHFAAPALG). The Extracellular portion of the chain corresponds to 18–335 (FYFSISCPSG…RADSVLKGLK (318 aa)). Residues Asn45, Asn68, and Asn130 are each glycosylated (N-linked (GlcNAc...) asparagine). The chain crosses the membrane as a helical span at residues 336–356 (LVLLVVTVLALLGALLKCIHP). Topologically, residues 357–369 (SPGRRSTQVLVVK) are cytoplasmic.

It belongs to the FAM187 family.

The protein resides in the membrane. The chain is Protein FAM187B (FAM187B) from Homo sapiens (Human).